Here is a 316-residue protein sequence, read N- to C-terminus: 4-hydroxyphenylacetate decarboxylase activating enzyme (316 aa).

The 288-residue stretch at 20–307 (HDGPGCRTTV…QDIFLDNGIA (288 aa)) folds into the Radical SAM core domain. The [4Fe-4S] cluster site is built by Cys34, Cys38, Cys41, Cys60, Cys66, Cys69, and Cys105. Residue 40–42 (WCA) participates in S-adenosyl-L-methionine binding. The 4Fe-4S ferredoxin-type domain occupies 84-115 (NKPVIDWNICKDCESFECVNSCYYNAFKLCAK). S-adenosyl-L-methionine is bound by residues Gly144, 193–195 (DIK), and His267.

This sequence belongs to the organic radical-activating enzymes family. As to quaternary structure, monomer. [4Fe-4S] cluster serves as cofactor.

The enzyme catalyses glycyl-[protein] + reduced [flavodoxin] + S-adenosyl-L-methionine = glycin-2-yl radical-[protein] + semiquinone [flavodoxin] + 5'-deoxyadenosine + L-methionine + H(+). Its function is as follows. Catalyzes activation of 4-hydroxyphenylacetate decarboxylase under anaerobic conditions by generation of an organic free radical on a glycine residue, via a homolytic cleavage of S-adenosyl-L-methionine (SAM). The sequence is that of 4-hydroxyphenylacetate decarboxylase activating enzyme from Clostridioides difficile (Peptoclostridium difficile).